We begin with the raw amino-acid sequence, 233 residues long: Phosphatidylserine decarboxylase proenzyme (233 aa).

Ser190 (schiff-base intermediate with substrate; via pyruvic acid) is an active-site residue. Ser190 is subject to Pyruvic acid (Ser); by autocatalysis.

This sequence belongs to the phosphatidylserine decarboxylase family. PSD-A subfamily. Heterodimer of a large membrane-associated beta subunit and a small pyruvoyl-containing alpha subunit. It depends on pyruvate as a cofactor. Post-translationally, is synthesized initially as an inactive proenzyme. Formation of the active enzyme involves a self-maturation process in which the active site pyruvoyl group is generated from an internal serine residue via an autocatalytic post-translational modification. Two non-identical subunits are generated from the proenzyme in this reaction, and the pyruvate is formed at the N-terminus of the alpha chain, which is derived from the carboxyl end of the proenzyme. The post-translation cleavage follows an unusual pathway, termed non-hydrolytic serinolysis, in which the side chain hydroxyl group of the serine supplies its oxygen atom to form the C-terminus of the beta chain, while the remainder of the serine residue undergoes an oxidative deamination to produce ammonia and the pyruvoyl prosthetic group on the alpha chain.

The protein resides in the cell membrane. The enzyme catalyses a 1,2-diacyl-sn-glycero-3-phospho-L-serine + H(+) = a 1,2-diacyl-sn-glycero-3-phosphoethanolamine + CO2. The protein operates within phospholipid metabolism; phosphatidylethanolamine biosynthesis; phosphatidylethanolamine from CDP-diacylglycerol: step 2/2. In terms of biological role, catalyzes the formation of phosphatidylethanolamine (PtdEtn) from phosphatidylserine (PtdSer). In Bartonella quintana (strain Toulouse) (Rochalimaea quintana), this protein is Phosphatidylserine decarboxylase proenzyme.